A 186-amino-acid polypeptide reads, in one-letter code: ATP synthase subunit delta (186 aa).

It belongs to the ATPase delta chain family. In terms of assembly, F-type ATPases have 2 components, F(1) - the catalytic core - and F(0) - the membrane proton channel. F(1) has five subunits: alpha(3), beta(3), gamma(1), delta(1), epsilon(1). F(0) has three main subunits: a(1), b(2) and c(10-14). The alpha and beta chains form an alternating ring which encloses part of the gamma chain. F(1) is attached to F(0) by a central stalk formed by the gamma and epsilon chains, while a peripheral stalk is formed by the delta and b chains.

The protein localises to the cell inner membrane. Functionally, f(1)F(0) ATP synthase produces ATP from ADP in the presence of a proton or sodium gradient. F-type ATPases consist of two structural domains, F(1) containing the extramembraneous catalytic core and F(0) containing the membrane proton channel, linked together by a central stalk and a peripheral stalk. During catalysis, ATP synthesis in the catalytic domain of F(1) is coupled via a rotary mechanism of the central stalk subunits to proton translocation. This protein is part of the stalk that links CF(0) to CF(1). It either transmits conformational changes from CF(0) to CF(1) or is implicated in proton conduction. This is ATP synthase subunit delta from Ruegeria sp. (strain TM1040) (Silicibacter sp.).